Consider the following 691-residue polypeptide: Dynamin-1-like protein (691 aa).

In terms of domain architecture, Dynamin-type G spans 22–301 (IIQLPQIAVV…LMHHIRDCLP (280 aa)). Residues 32–39 (GTQSSGKS) form a G1 motif region. 32–40 (GTQSSGKSS) serves as a coordination point for GTP. A G2 motif region spans residues 58–60 (VTR). The tract at residues 145–148 (DLPG) is G3 motif. The tract at residues 214-217 (TKLD) is G4 motif. GTP is bound by residues 214-220 (TKLDLMD) and 245-248 (NRSQ). Positions 244-247 (VNRS) are G5 motif. The interval 343-488 (YCNTIEGTAK…NEMVHNLVAI (146 aa)) is middle domain. Composition is skewed to basic and acidic residues over residues 522 to 531 (LPTSVPRDKM) and 551 to 563 (KKGD…EKTK). The interval 522–573 (LPTSVPRDKMAGGAQAEQEGGTGTWRGMLKKGDEGQGEEKTKLQSSIPASPQ) is disordered. Residues 599–690 (CEVIERLIKS…VIAEIRETHL (92 aa)) enclose the GED domain. Residues 609 to 623 (YFLIVRKNIQDSVPK) are important for homodimerization.

This sequence belongs to the TRAFAC class dynamin-like GTPase superfamily. Dynamin/Fzo/YdjA family. As to quaternary structure, homotetramer; dimerizes through the N-terminal GTP-middle region of one molecule binding to the GED domain of another DNM1L molecule. Oligomerizes in a GTP-dependent manner to form membrane-associated tubules with a spiral pattern.

It is found in the cytoplasm. The protein localises to the cytosol. The protein resides in the golgi apparatus. Its subcellular location is the endomembrane system. It localises to the mitochondrion outer membrane. It is found in the peroxisome. The protein localises to the membrane. The protein resides in the clathrin-coated pit. Its subcellular location is the cytoplasmic vesicle. It localises to the secretory vesicle. It is found in the synaptic vesicle membrane. It carries out the reaction GTP + H2O = GDP + phosphate + H(+). Its function is as follows. Functions in mitochondrial and peroxisomal division. Mediates membrane fission through oligomerization into membrane-associated tubular structures that wrap around the scission site to constrict and sever the mitochondrial membrane through a GTP hydrolysis-dependent mechanism. The specific recruitment at scission sites is mediated by membrane receptors like MFF, MIEF1 and MIEF2 for mitochondrial membranes. While the recruitment by the membrane receptors is GTP-dependent, the following hydrolysis of GTP induces the dissociation from the receptors and allows DNM1L filaments to curl into closed rings that are probably sufficient to sever a double membrane. May play a role in the circadian control of mitochondrial ATP production. The sequence is that of Dynamin-1-like protein from Danio rerio (Zebrafish).